A 364-amino-acid polypeptide reads, in one-letter code: Anthranilate N-methyltransferase (364 aa).

Residues 1-20 (MGSLSESHTQYKHGVEVEED) are disordered. The S-adenosyl-L-methionine site is built by G209, D232, M253, and K266. The Proton acceptor role is filled by H270.

Belongs to the class I-like SAM-binding methyltransferase superfamily. Cation-independent O-methyltransferase family. COMT subfamily. As to quaternary structure, homodimer. Expressed in leaves, flowers, stems and roots. Detected in the vascular tissues in stems, in the rhizodermis or the endodermis of roots, in the inside of carpels, in the central vascular bundles of the syncarp ovary and in the secretory oil glands located around the outer ovary wall.

The catalysed reaction is anthranilate + S-adenosyl-L-methionine = N-methylanthranilate + S-adenosyl-L-homocysteine + H(+). Inhibited by Ca(2+), Co(2+), Fe(2+), Fe(3+), Cu(2+) or Zn(2+). No effect of Mg(2+). In terms of biological role, involved in the biosynthesis of acridine alkaloids. N-methyltransferase with a strict substrate specificity for anthranilate. No activity with anthranilic acid methyl ester, anthraniloyl CoA, 3- or 4-amino-benzoic acid, salicylic acid, catechol, eugenol, caffeic acid, quercetin, theobromin, theophyllin, putrescine and nicotinic acid among others. In Ruta graveolens (Common rue), this protein is Anthranilate N-methyltransferase.